The following is a 207-amino-acid chain: Outer-membrane lipoprotein LolB (207 aa).

Positions 1-21 (MPLPDFRLIRLLPLAALVLTA) are cleaved as a signal peptide. A lipid anchor (N-palmitoyl cysteine) is attached at Cys22. A lipid anchor (S-diacylglycerol cysteine) is attached at Cys22.

This sequence belongs to the LolB family. In terms of assembly, monomer.

The protein resides in the cell outer membrane. Its function is as follows. Plays a critical role in the incorporation of lipoproteins in the outer membrane after they are released by the LolA protein. The chain is Outer-membrane lipoprotein LolB from Shigella boydii serotype 18 (strain CDC 3083-94 / BS512).